The following is a 131-amino-acid chain: Small ribosomal subunit protein uS8 (131 aa).

This sequence belongs to the universal ribosomal protein uS8 family. As to quaternary structure, part of the 30S ribosomal subunit. Contacts proteins S5 and S12.

Functionally, one of the primary rRNA binding proteins, it binds directly to 16S rRNA central domain where it helps coordinate assembly of the platform of the 30S subunit. The protein is Small ribosomal subunit protein uS8 of Bordetella petrii (strain ATCC BAA-461 / DSM 12804 / CCUG 43448).